We begin with the raw amino-acid sequence, 378 residues long: Chaperone protein DnaJ (378 aa).

One can recognise a J domain in the interval 5–70 (DFYEILGVSK…EKRSAYDRMG (66 aa)). A CR-type zinc finger spans residues 137–215 (GCKKEISFTA…CHGNGVKDKS (79 aa)). Zn(2+) contacts are provided by Cys150, Cys153, Cys167, Cys170, Cys189, Cys192, Cys203, and Cys206. CXXCXGXG motif repeat units follow at residues 150 to 157 (CDTCDGKG), 167 to 174 (CQTCHGQG), 189 to 196 (CPHCGGTG), and 203 to 210 (CSDCHGNG).

This sequence belongs to the DnaJ family. As to quaternary structure, homodimer. The cofactor is Zn(2+).

The protein resides in the cytoplasm. Participates actively in the response to hyperosmotic and heat shock by preventing the aggregation of stress-denatured proteins and by disaggregating proteins, also in an autonomous, DnaK-independent fashion. Unfolded proteins bind initially to DnaJ; upon interaction with the DnaJ-bound protein, DnaK hydrolyzes its bound ATP, resulting in the formation of a stable complex. GrpE releases ADP from DnaK; ATP binding to DnaK triggers the release of the substrate protein, thus completing the reaction cycle. Several rounds of ATP-dependent interactions between DnaJ, DnaK and GrpE are required for fully efficient folding. Also involved, together with DnaK and GrpE, in the DNA replication of plasmids through activation of initiation proteins. In Psychrobacter cryohalolentis (strain ATCC BAA-1226 / DSM 17306 / VKM B-2378 / K5), this protein is Chaperone protein DnaJ.